Consider the following 93-residue polypeptide: MENDRQAIVVWMNHLKQVRSLKRFGNVHYVSRKLKYAVLYCDMAEVEDISEKVSRFHYVKRVEMSFRPFLKTEYESKKEMMYEHKNEDVQISI.

The protein belongs to the UPF0298 family.

Its subcellular location is the cytoplasm. The chain is UPF0298 protein lwe2074 from Listeria welshimeri serovar 6b (strain ATCC 35897 / DSM 20650 / CCUG 15529 / CIP 8149 / NCTC 11857 / SLCC 5334 / V8).